The chain runs to 277 residues: Undecaprenyl-diphosphatase (277 aa).

Transmembrane regions (helical) follow at residues 88–108, 117–137, 157–179, 191–211, 227–247, and 255–275; these read MGWLVILGSLPIIVLGLLFQD, MWIVATMLIVFGMILAVADAV, FAQAMALIPGVSRSGGTITAGLL, SFLLAIPAVFGSGLYQLYKTV, LATVIAFVVGYVIIGWFLKFV, and FVWYRILLGLALYVLLGFNVI.

It belongs to the UppP family.

The protein resides in the cell membrane. The catalysed reaction is di-trans,octa-cis-undecaprenyl diphosphate + H2O = di-trans,octa-cis-undecaprenyl phosphate + phosphate + H(+). Functionally, catalyzes the dephosphorylation of undecaprenyl diphosphate (UPP). Confers resistance to bacitracin. This Paenarthrobacter aurescens (strain TC1) protein is Undecaprenyl-diphosphatase.